We begin with the raw amino-acid sequence, 307 residues long: Mediator of RNA polymerase II transcription subunit 18 (307 aa).

Residues 117–126 are compositionally biased toward polar residues; sequence TNFNSTNEDQ. Positions 117–162 are disordered; it reads TNFNSTNEDQNNSKHTEDTVNESRNSDDIIDVDMDASPAPSNESCS.

This sequence belongs to the Mediator complex subunit 18 family. Component of the Mediator complex, which is composed of at least 21 subunits that form three structurally distinct submodules. The Mediator head module contains MED6, MED8, MED11, SRB4/MED17, SRB5/MED18, ROX3/MED19, SRB2/MED20 and SRB6/MED22, the middle module contains MED1, MED4, NUT1/MED5, MED7, CSE2/MED9, NUT2/MED10, SRB7/MED21 and SOH1/MED31, and the tail module contains MED2, PGD1/MED3, RGR1/MED14, GAL11/MED15 and SIN4/MED16. The head and the middle modules interact directly with RNA polymerase II, whereas the elongated tail module interacts with gene-specific regulatory proteins. SRB5/MED18 interacts directly with MED8 and SRB2/MED20.

Its subcellular location is the nucleus. Functionally, component of the Mediator complex, a coactivator involved in the regulated transcription of nearly all RNA polymerase II-dependent genes. Mediator functions as a bridge to convey information from gene-specific regulatory proteins to the basal RNA polymerase II transcription machinery. The Mediator complex, having a compact conformation in its free form, is recruited to promoters by direct interactions with regulatory proteins and serves for the assembly of a functional preinitiation complex with RNA polymerase II and the general transcription factors. The Mediator complex unfolds to an extended conformation and partially surrounds RNA polymerase II, specifically interacting with the unphosphorylated form of the C-terminal domain (CTD) of RNA polymerase II. The Mediator complex dissociates from the RNA polymerase II holoenzyme and stays at the promoter when transcriptional elongation begins. This Saccharomyces cerevisiae (strain ATCC 204508 / S288c) (Baker's yeast) protein is Mediator of RNA polymerase II transcription subunit 18 (SRB5).